A 103-amino-acid chain; its full sequence is Nucleoid-associated protein Anae109_3761 (103 aa).

It belongs to the YbaB/EbfC family. As to quaternary structure, homodimer.

Its subcellular location is the cytoplasm. The protein resides in the nucleoid. Functionally, binds to DNA and alters its conformation. May be involved in regulation of gene expression, nucleoid organization and DNA protection. In Anaeromyxobacter sp. (strain Fw109-5), this protein is Nucleoid-associated protein Anae109_3761.